Reading from the N-terminus, the 875-residue chain is Neurotrypsin (875 aa).

Residues 1–20 (MTLARFVLALVLGALPEVVX) form the signal peptide. The N-linked (GlcNAc...) asparagine glycan is linked to Asn-26. A disordered region spans residues 31–88 (HRPRHSPPTGPHYPYYLPTQQRPPRTRPPPPLPRFPRPPRALPAQRPHALQAGHTPRP). Residues 56-71 (TRPPPPLPRFPRPPRA) are compositionally biased toward pro residues. The Kringle domain maps to 93–165 (CPAGEPWVSV…GKVDWGYCDC (73 aa)). Cystine bridges form between Cys-93–Cys-165, Cys-109–Cys-149, Cys-138–Cys-163, Cys-195–Cys-259, Cys-208–Cys-269, Cys-239–Cys-249, Cys-305–Cys-369, Cys-318–Cys-379, Cys-349–Cys-359, Cys-412–Cys-475, Cys-425–Cys-485, Cys-455–Cys-465, Cys-525–Cys-589, Cys-538–Cys-599, Cys-569–Cys-579, Cys-619–Cys-750, Cys-661–Cys-677, Cys-765–Cys-831, Cys-794–Cys-808, and Cys-821–Cys-850. SRCR domains are found at residues 170-271 (IRLR…TCSF), 280-381 (IRLV…SCTP), 387-487 (IRLA…ACYP), and 500-601 (VRLM…ICDY). The segment at 619-630 (CGLRLLHRRQKR) is zymogen activation region. The region spanning 631-874 (IIGGKNSLRG…FVPWIKSVTK (244 aa)) is the Peptidase S1 domain. His-676 (charge relay system) is an active-site residue. Asn-683 is a glycosylation site (N-linked (GlcNAc...) asparagine). The active-site Charge relay system is the Asp-726. The active-site Charge relay system is Ser-825.

This sequence belongs to the peptidase S1 family.

The protein resides in the secreted. Functionally, plays a role in neuronal plasticity and the proteolytic action may subserve structural reorganizations associated with learning and memory operations. The protein is Neurotrypsin (PRSS12) of Nomascus leucogenys (Northern white-cheeked gibbon).